Here is a 241-residue protein sequence, read N- to C-terminus: Biosynthetic peptidoglycan transglycosylase (241 aa).

A helical membrane pass occupies residues 18–38; sequence GVIGIIALWMAGILIFAFLPV.

The protein belongs to the glycosyltransferase 51 family.

The protein resides in the cell inner membrane. It carries out the reaction [GlcNAc-(1-&gt;4)-Mur2Ac(oyl-L-Ala-gamma-D-Glu-L-Lys-D-Ala-D-Ala)](n)-di-trans,octa-cis-undecaprenyl diphosphate + beta-D-GlcNAc-(1-&gt;4)-Mur2Ac(oyl-L-Ala-gamma-D-Glu-L-Lys-D-Ala-D-Ala)-di-trans,octa-cis-undecaprenyl diphosphate = [GlcNAc-(1-&gt;4)-Mur2Ac(oyl-L-Ala-gamma-D-Glu-L-Lys-D-Ala-D-Ala)](n+1)-di-trans,octa-cis-undecaprenyl diphosphate + di-trans,octa-cis-undecaprenyl diphosphate + H(+). Its pathway is cell wall biogenesis; peptidoglycan biosynthesis. In terms of biological role, peptidoglycan polymerase that catalyzes glycan chain elongation from lipid-linked precursors. This is Biosynthetic peptidoglycan transglycosylase from Yersinia pseudotuberculosis serotype O:3 (strain YPIII).